Consider the following 982-residue polypeptide: Presequence protease, mitochondrial (982 aa).

The transit peptide at methionine 1–tyrosine 7 directs the protein to the mitochondrion. Histidine 84 is a binding site for Zn(2+). The active-site Proton acceptor is glutamate 87. A Zn(2+)-binding site is contributed by histidine 88. Residue glutamate 160 is part of the active site. Glutamate 185 lines the Zn(2+) pocket.

The protein belongs to the peptidase M16 family. PreP subfamily. As to quaternary structure, monomer and homodimer; homodimerization is induced by binding of the substrate. Zn(2+) serves as cofactor.

It localises to the mitochondrion intermembrane space. It is found in the mitochondrion matrix. In terms of biological role, degrades mitochondrial transit peptides after their cleavage in the intermembrane space or in the matrix, and presequence peptides; clearance of these peptides is required to keep the presequence processing machinery running. Preferentially cleaves the N-terminal side of paired basic amino acid residues. Also degrades other unstructured peptides. May function as an ATP-dependent peptidase as opposed to a metalloendopeptidase. The chain is Presequence protease, mitochondrial (CYM1) from Kluyveromyces lactis (strain ATCC 8585 / CBS 2359 / DSM 70799 / NBRC 1267 / NRRL Y-1140 / WM37) (Yeast).